The primary structure comprises 189 residues: Pyridoxal 5'-phosphate synthase subunit PdxT (189 aa).

An L-glutamine-binding site is contributed by 47-49 (GES). The active-site Nucleophile is the C79. L-glutamine is bound by residues R106 and 135 to 136 (IR). Residues H171 and E173 each act as charge relay system in the active site.

The protein belongs to the glutaminase PdxT/SNO family. As to quaternary structure, in the presence of PdxS, forms a dodecamer of heterodimers. Only shows activity in the heterodimer.

It catalyses the reaction aldehydo-D-ribose 5-phosphate + D-glyceraldehyde 3-phosphate + L-glutamine = pyridoxal 5'-phosphate + L-glutamate + phosphate + 3 H2O + H(+). The catalysed reaction is L-glutamine + H2O = L-glutamate + NH4(+). It participates in cofactor biosynthesis; pyridoxal 5'-phosphate biosynthesis. In terms of biological role, catalyzes the hydrolysis of glutamine to glutamate and ammonia as part of the biosynthesis of pyridoxal 5'-phosphate. The resulting ammonia molecule is channeled to the active site of PdxS. The sequence is that of Pyridoxal 5'-phosphate synthase subunit PdxT from Desulforudis audaxviator (strain MP104C).